Here is a 44-residue protein sequence, read N- to C-terminus: Cytochrome b559 subunit beta (44 aa).

A helical transmembrane segment spans residues Trp19–Ala35. Position 23 (His23) interacts with heme.

This sequence belongs to the PsbE/PsbF family. Heterodimer of an alpha subunit and a beta subunit. PSII is composed of 1 copy each of membrane proteins PsbA, PsbB, PsbC, PsbD, PsbE, PsbF, PsbH, PsbI, PsbJ, PsbK, PsbL, PsbM, PsbT, PsbX, PsbY, PsbZ, Psb30/Ycf12, peripheral proteins PsbO, CyanoQ (PsbQ), PsbU, PsbV and a large number of cofactors. It forms dimeric complexes. Heme b serves as cofactor.

The protein localises to the cellular thylakoid membrane. Its function is as follows. This b-type cytochrome is tightly associated with the reaction center of photosystem II (PSII). PSII is a light-driven water:plastoquinone oxidoreductase that uses light energy to abstract electrons from H(2)O, generating O(2) and a proton gradient subsequently used for ATP formation. It consists of a core antenna complex that captures photons, and an electron transfer chain that converts photonic excitation into a charge separation. This Cyanothece sp. (strain PCC 7425 / ATCC 29141) protein is Cytochrome b559 subunit beta.